The sequence spans 173 residues: Nascent polypeptide-associated complex subunit alpha (173 aa).

The NAC-A/B domain occupies Val21–Ala85. The segment at Asn89–Ala117 is disordered. Phosphoserine is present on Ser122. The UBA domain maps to Val134–Leu171.

The protein belongs to the NAC-alpha family. As to quaternary structure, part of the nascent polypeptide-associated complex (NAC), consisting of ucp15 and btf3. NAC associates with ribosomes via btf3.

It localises to the cytoplasm. The protein resides in the nucleus. Component of the nascent polypeptide-associated complex (NAC), a dynamic component of the ribosomal exit tunnel, protecting the emerging polypeptides from interaction with other cytoplasmic proteins to ensure appropriate nascent protein targeting. The NAC complex also promotes mitochondrial protein import by enhancing productive ribosome interactions with the outer mitochondrial membrane and blocks the inappropriate interaction of ribosomes translating non-secretory nascent polypeptides with translocation sites in the membrane of the endoplasmic reticulum. Ucp15 may also be involved in transcription regulation. The protein is Nascent polypeptide-associated complex subunit alpha (egd2) of Schizosaccharomyces pombe (strain 972 / ATCC 24843) (Fission yeast).